Consider the following 411-residue polypeptide: Arginine deiminase 1 (411 aa).

Cysteine 401 (amidino-cysteine intermediate) is an active-site residue.

The protein belongs to the arginine deiminase family.

Its subcellular location is the cytoplasm. It catalyses the reaction L-arginine + H2O = L-citrulline + NH4(+). The protein operates within amino-acid degradation; L-arginine degradation via ADI pathway; carbamoyl phosphate from L-arginine: step 1/2. This Staphylococcus epidermidis (strain ATCC 12228 / FDA PCI 1200) protein is Arginine deiminase 1 (arcA1).